The sequence spans 255 residues: Small ribosomal subunit protein eS1 (255 aa).

Residues 1–18 are compositionally biased toward basic residues; that stretch reads MAVGKNKRLSKGKKGLKK. The interval 1–28 is disordered; the sequence is MAVGKNKRLSKGKKGLKKRTQDPFSRKD. Ala2 is modified (N-acetylalanine; partial). Residues 19–28 are compositionally biased toward basic and acidic residues; that stretch reads RTQDPFSRKD.

The protein belongs to the eukaryotic ribosomal protein eS1 family. As to quaternary structure, component of the small ribosomal subunit. Mature ribosomes consist of a small (40S) and a large (60S) subunit. The 40S subunit contains about 33 different proteins and 1 molecule of RNA (18S). The 60S subunit contains about 49 different proteins and 3 molecules of RNA (25S, 5.8S and 5S).

The protein localises to the cytoplasm. This is Small ribosomal subunit protein eS1 from Paracoccidioides lutzii (strain ATCC MYA-826 / Pb01) (Paracoccidioides brasiliensis).